Reading from the N-terminus, the 296-residue chain is tRNA dimethylallyltransferase (296 aa).

2 to 9 lines the ATP pocket; the sequence is GPTASGKT. Residue 4-9 participates in substrate binding; it reads TASGKT. 3 interaction with substrate tRNA regions span residues 27–30, 151–155, and 232–237; these read DSAL, QRLSR, and RCVGYR.

The protein belongs to the IPP transferase family. Monomer. Mg(2+) is required as a cofactor.

The enzyme catalyses adenosine(37) in tRNA + dimethylallyl diphosphate = N(6)-dimethylallyladenosine(37) in tRNA + diphosphate. Catalyzes the transfer of a dimethylallyl group onto the adenine at position 37 in tRNAs that read codons beginning with uridine, leading to the formation of N6-(dimethylallyl)adenosine (i(6)A). The sequence is that of tRNA dimethylallyltransferase from Shewanella baltica (strain OS155 / ATCC BAA-1091).